A 430-amino-acid polypeptide reads, in one-letter code: Histidine--tRNA ligase (430 aa).

The protein belongs to the class-II aminoacyl-tRNA synthetase family. Homodimer.

It is found in the cytoplasm. It catalyses the reaction tRNA(His) + L-histidine + ATP = L-histidyl-tRNA(His) + AMP + diphosphate + H(+). This is Histidine--tRNA ligase from Acinetobacter baumannii (strain ATCC 17978 / DSM 105126 / CIP 53.77 / LMG 1025 / NCDC KC755 / 5377).